We begin with the raw amino-acid sequence, 415 residues long: Camphor 5-monooxygenase (415 aa).

Residue Cys358 participates in heme binding.

Belongs to the cytochrome P450 family. Heme serves as cofactor.

It is found in the cytoplasm. It catalyses the reaction 2 reduced [2Fe-2S]-[putidaredoxin] + (1R,4R)-camphor + O2 + 2 H(+) = (1R,4R,5R)-5-hydroxycamphor + 2 oxidized [2Fe-2S]-[putidaredoxin] + H2O. It functions in the pathway terpene metabolism; (R)-camphor degradation. Its function is as follows. Involved in a camphor oxidation system. This chain is Camphor 5-monooxygenase (camC), found in Pseudomonas putida (Arthrobacter siderocapsulatus).